A 303-amino-acid polypeptide reads, in one-letter code: Methyltransferase ktnA (303 aa).

The protein belongs to the class I-like SAM-binding methyltransferase superfamily. S-adenosyl-L-methionine serves as cofactor.

Functionally, non-reducing polyketide synthase; part of the gene cluster that mediates the biosynthesis of the bicoumarin kotanin. The non-reducing polyketide synthase ktnS first catalyzes the formation of the pentaketidic 4,7-dihydroxy-5-methylcoumarin from acetyl coenzyme A and 4 malonyl coenzyme A molecules. Further O-methylation by ktnB leads to the formation of 7-demethylsiderin. Then, an oxidative phenol coupling catalyzed by the cytochrome P450 monooxygenase ktnC forms the 8,8'-dimer P-orlandin via dimerization the monomeric precursor, 7-demethylsiderin. P-orlandin is subsequently O-methylated in a stepwise fashion to demethylkotanin and kotanin. The function of ktnA within the pathway has not been determined yet. The sequence is that of Methyltransferase ktnA from Aspergillus niger (strain ATCC MYA-4892 / CBS 513.88 / FGSC A1513).